The primary structure comprises 370 residues: uncharacterized protein (370 aa).

This is an uncharacterized protein from Caenorhabditis elegans.